The sequence spans 354 residues: UPF0496 protein At4g34330 (354 aa).

A run of 2 helical transmembrane segments spans residues 200 to 220 (IIFMATFATLVICSVLAATMA) and 222 to 242 (PHVAAALAAATPPVGSMGKWI). Residues 270–341 (AVQDLNNIKD…CSTDIRRART (72 aa)) are a coiled coil.

The protein belongs to the UPF0496 family.

The protein resides in the membrane. This Arabidopsis thaliana (Mouse-ear cress) protein is UPF0496 protein At4g34330.